The following is a 338-amino-acid chain: Ketol-acid reductoisomerase (NADP(+)) (338 aa).

The KARI N-terminal Rossmann domain occupies 1 to 181 (MKVFYDKDAD…GGGKAGIIET (181 aa)). NADP(+)-binding positions include 24–27 (YGSQ), arginine 47, and serine 52. Histidine 107 is an active-site residue. Position 133 (glycine 133) interacts with NADP(+). A KARI C-terminal knotted domain is found at 182-327 (NFREETETDL…EKLRAMMPWI (146 aa)). Residues aspartate 190, glutamate 194, glutamate 226, and glutamate 230 each contribute to the Mg(2+) site. Serine 251 provides a ligand contact to substrate.

This sequence belongs to the ketol-acid reductoisomerase family. The cofactor is Mg(2+).

The catalysed reaction is (2R)-2,3-dihydroxy-3-methylbutanoate + NADP(+) = (2S)-2-acetolactate + NADPH + H(+). The enzyme catalyses (2R,3R)-2,3-dihydroxy-3-methylpentanoate + NADP(+) = (S)-2-ethyl-2-hydroxy-3-oxobutanoate + NADPH + H(+). Its pathway is amino-acid biosynthesis; L-isoleucine biosynthesis; L-isoleucine from 2-oxobutanoate: step 2/4. It participates in amino-acid biosynthesis; L-valine biosynthesis; L-valine from pyruvate: step 2/4. In terms of biological role, involved in the biosynthesis of branched-chain amino acids (BCAA). Catalyzes an alkyl-migration followed by a ketol-acid reduction of (S)-2-acetolactate (S2AL) to yield (R)-2,3-dihydroxy-isovalerate. In the isomerase reaction, S2AL is rearranged via a Mg-dependent methyl migration to produce 3-hydroxy-3-methyl-2-ketobutyrate (HMKB). In the reductase reaction, this 2-ketoacid undergoes a metal-dependent reduction by NADPH to yield (R)-2,3-dihydroxy-isovalerate. This Leptothrix cholodnii (strain ATCC 51168 / LMG 8142 / SP-6) (Leptothrix discophora (strain SP-6)) protein is Ketol-acid reductoisomerase (NADP(+)).